Consider the following 158-residue polypeptide: uncharacterized protein (158 aa).

The segment covering 1–18 has biased composition (polar residues); the sequence is MDLASEITSATQTSSLCS. Disordered regions lie at residues 1 to 20, 66 to 94, and 111 to 158; these read MDLASEITSATQTSSLCSSG, LRDLSRRGSTSSSRSPSRPVSTSASKPCL, and GSSG…GEEF. A compositionally biased stretch (low complexity) spans 72-90; the sequence is RGSTSSSRSPSRPVSTSAS. 2 stretches are compositionally biased toward polar residues: residues 111-120 and 149-158; these read GSSGHLQSPG and LSHSAQGEEF.

This is an uncharacterized protein from Homo sapiens (Human).